A 157-amino-acid polypeptide reads, in one-letter code: NudC domain-containing protein 2 (157 aa).

S2 is modified (N-acetylserine). A CS domain is found at 14–104; that stretch reads CATPWGQWYQ…DAANCWTSLL (91 aa). Positions 134 to 157 are disordered; sequence FDFSGAEISGNYTKGGPDFSNLEK. Position 142 is a phosphoserine (S142). Residue Y145 is modified to Phosphotyrosine.

In terms of assembly, interacts with LIS1.

It is found in the chromosome. It localises to the centromere. Its subcellular location is the kinetochore. The protein resides in the cytoplasm. The protein localises to the cytoskeleton. It is found in the microtubule organizing center. It localises to the centrosome. Its subcellular location is the spindle pole. May regulate the LIS1/dynein pathway by stabilizing LIS1 with Hsp90 chaperone. The chain is NudC domain-containing protein 2 (Nudcd2) from Rattus norvegicus (Rat).